The chain runs to 89 residues: Small ribosomal subunit protein uS15 (89 aa).

The protein belongs to the universal ribosomal protein uS15 family. In terms of assembly, part of the 30S ribosomal subunit. Forms a bridge to the 50S subunit in the 70S ribosome, contacting the 23S rRNA.

In terms of biological role, one of the primary rRNA binding proteins, it binds directly to 16S rRNA where it helps nucleate assembly of the platform of the 30S subunit by binding and bridging several RNA helices of the 16S rRNA. Forms an intersubunit bridge (bridge B4) with the 23S rRNA of the 50S subunit in the ribosome. The protein is Small ribosomal subunit protein uS15 of Paenarthrobacter aurescens (strain TC1).